Here is a 152-residue protein sequence, read N- to C-terminus: Sulfur-rich protein (152 aa).

Polar residues predominate over residues 1-11; sequence MSTTPIVSGVT. The interval 1-21 is disordered; it reads MSTTPIVSGVTSQNNSSENVS. Over residues 12–21 the composition is skewed to low complexity; sequence SQNNSSENVS. A run of 2 helical transmembrane segments spans residues 44 to 64 and 73 to 93; these read VGLA…LFIL and IYLA…ILSM.

It localises to the membrane. The sequence is that of Sulfur-rich protein (srp) from Chlamydia muridarum (strain MoPn / Nigg).